A 246-amino-acid chain; its full sequence is Large ribosomal subunit protein uL2 (246 aa).

Residues 196-226 (MSPYAHPHGGGSHQKGGTPVPKTAPPGQKVG) are disordered.

The protein belongs to the universal ribosomal protein uL2 family. As to quaternary structure, part of the 50S ribosomal subunit. Forms a bridge to the 30S subunit in the 70S ribosome.

One of the primary rRNA binding proteins. Required for association of the 30S and 50S subunits to form the 70S ribosome, for tRNA binding and peptide bond formation. It has been suggested to have peptidyltransferase activity; this is somewhat controversial. Makes several contacts with the 16S rRNA in the 70S ribosome. The chain is Large ribosomal subunit protein uL2 from Pyrobaculum arsenaticum (strain DSM 13514 / JCM 11321 / PZ6).